The primary structure comprises 420 residues: Synaptosomal-associated protein 47 (420 aa).

2 consecutive t-SNARE coiled-coil homology domains span residues 110 to 172 (AEAA…LTEL) and 357 to 419 (TSEP…MKKL). A disordered region spans residues 338–357 (ATHCEPSSGSQEGRPLQLQT). Over residues 342–357 (EPSSGSQEGRPLQLQT) the composition is skewed to polar residues.

This sequence belongs to the SVAP1 family. Forms a complex containing SNAP47, VAMP2 and STX1A. Associates with the BLOC-1 complex. Interacts with BLOC1S6.

Its subcellular location is the endomembrane system. The protein resides in the cytoplasm. It localises to the perinuclear region. Functionally, may play a role in intracellular membrane fusion. The sequence is that of Synaptosomal-associated protein 47 (SNAP47) from Bos taurus (Bovine).